The sequence spans 321 residues: Probable pectate lyase A (321 aa).

The signal sequence occupies residues 1–18 (MKFVATLIACGLSGLALA). N-linked (GlcNAc...) asparagine glycosylation is present at Asn-93. The Ca(2+) site is built by Asp-134, Asp-163, and Asp-167. Arg-220 is an active-site residue. A glycan (N-linked (GlcNAc...) asparagine) is linked at Asn-238.

It belongs to the polysaccharide lyase 1 family. It depends on Ca(2+) as a cofactor.

Its subcellular location is the secreted. It carries out the reaction Eliminative cleavage of (1-&gt;4)-alpha-D-galacturonan to give oligosaccharides with 4-deoxy-alpha-D-galact-4-enuronosyl groups at their non-reducing ends.. Functionally, pectinolytic enzyme consist of four classes of enzymes: pectin lyase, polygalacturonase, pectin methylesterase and rhamnogalacturonase. Among pectinolytic enzymes, pectin lyase is the most important in depolymerization of pectin, since it cleaves internal glycosidic bonds of highly methylated pectins. Favors pectate, the anion, over pectin, the methyl ester. This chain is Probable pectate lyase A (plyA), found in Aspergillus fumigatus (strain CBS 144.89 / FGSC A1163 / CEA10) (Neosartorya fumigata).